The primary structure comprises 195 residues: Putative nucleotidase BH1399 (195 aa).

The protein belongs to the 5'(3')-deoxyribonucleotidase family.

This chain is Putative nucleotidase BH1399, found in Halalkalibacterium halodurans (strain ATCC BAA-125 / DSM 18197 / FERM 7344 / JCM 9153 / C-125) (Bacillus halodurans).